Reading from the N-terminus, the 199-residue chain is ATP-dependent Clp protease proteolytic subunit (199 aa).

Residues methionine 1–serine 23 are disordered. The active-site Nucleophile is serine 100. Histidine 125 is an active-site residue.

The protein belongs to the peptidase S14 family. As to quaternary structure, fourteen ClpP subunits assemble into 2 heptameric rings which stack back to back to give a disk-like structure with a central cavity, resembling the structure of eukaryotic proteasomes.

The protein localises to the cytoplasm. It catalyses the reaction Hydrolysis of proteins to small peptides in the presence of ATP and magnesium. alpha-casein is the usual test substrate. In the absence of ATP, only oligopeptides shorter than five residues are hydrolyzed (such as succinyl-Leu-Tyr-|-NHMec, and Leu-Tyr-Leu-|-Tyr-Trp, in which cleavage of the -Tyr-|-Leu- and -Tyr-|-Trp bonds also occurs).. Cleaves peptides in various proteins in a process that requires ATP hydrolysis. Has a chymotrypsin-like activity. Plays a major role in the degradation of misfolded proteins. The sequence is that of ATP-dependent Clp protease proteolytic subunit from Paracoccus denitrificans.